We begin with the raw amino-acid sequence, 663 residues long: Innate immunity activator protein (663 aa).

The interval 1–73 is disordered; the sequence is MLQMPKLNEI…PGPGWDQCSP (73 aa). The segment covering 23–47 has biased composition (low complexity); that stretch reads EGRWAGPTGPEAARPARGARGQARG. A compositionally biased stretch (basic and acidic residues) spans 50–59; the sequence is ARWDSWEHSR. A coiled-coil region spans residues 117–147; that stretch reads NAVRKQQRALEARLEACLEELRRLCLREAEL. Residues 164–170 carry the Nuclear localization signal (NLS) 1 motif; that stretch reads PKVRRRI. Disordered regions lie at residues 219-363 and 375-405; these read RQRK…SSLW and IRNV…QSLR. Basic and acidic residues predominate over residues 225-246; the sequence is ALQEEKKLRDLQRCLGDRRRNS. A compositionally biased stretch (low complexity) spans 259–272; it reads ELSASDDSSLSDGL. Residues 282-298 are compositionally biased toward pro residues; sequence PKPPPESPAPPSRPLPP. Positions 327–340 are enriched in basic and acidic residues; that stretch reads TSLDHPYEKPRKSS. Positions 332–338 match the Nuclear localization signal (NLS) 2 motif; sequence PYEKPRK. Residues 349-361 show a composition bias toward polar residues; the sequence is PATTPQDQPNPSS. The Nuclear localization signal (NLS) 3 motif lies at 422-428; the sequence is PRRRPTH. The segment at 448 to 483 is disordered; the sequence is PACHSCSEDSGSDVSSISHPTSPGSSSPDISFLRPL. The segment covering 455–475 has biased composition (low complexity); it reads EDSGSDVSSISHPTSPGSSSP.

As to quaternary structure, interacts with IRAK1, NOD2 and RIPK2; the interaction takes place upon PRR stimulation. Interacts with YWHAQ/14-3-3T; the interaction increases upon PRR stimulation and is required for cellular signaling pathway activation and cytokine secretion. Interacts (via N-terminal domain) with CYTH1 and CYTH2 (via their N-terminal domains). Interacts with FBXW11 and BTRC; associates with SCF E3 ubiquitin-protein ligase complexes.

The protein resides in the nucleus. The protein localises to the cytoplasm. In terms of biological role, expressed in peripheral macrophages and intestinal myeloid-derived cells, is required for optimal PRR (pattern recognition receptor)-induced signaling, cytokine secretion, and bacterial clearance. Upon stimulation of a broad range of PRRs (pattern recognition receptor) such as NOD2 or TLR2, TLR3, TLR4, TLR5, TLR7 and TLR9, associates with YWHAQ/14-3-3T, which in turn leads to the recruitment and activation of MAP kinases and NF-kappa-B signaling complexes that amplifies PRR-induced downstream signals and cytokine secretion. In the intestine, regulates adherens junction stability by regulating the degradation of CYTH1 and CYTH2, probably acting as substrate cofactor for SCF E3 ubiquitin-protein ligase complexes. Stabilizes adherens junctions by limiting CYTH1-dependent ARF6 activation. The protein is Innate immunity activator protein of Mus musculus (Mouse).